The sequence spans 344 residues: Biotin synthase (344 aa).

The Radical SAM core domain occupies 36 to 260 (NQIQISTLLS…MMPTSYIRLS (225 aa)). 3 residues coordinate [4Fe-4S] cluster: C51, C55, and C58. 4 residues coordinate [2Fe-2S] cluster: C95, C126, C186, and R258.

It belongs to the radical SAM superfamily. Biotin synthase family. In terms of assembly, homodimer. Requires [4Fe-4S] cluster as cofactor. The cofactor is [2Fe-2S] cluster.

It carries out the reaction (4R,5S)-dethiobiotin + (sulfur carrier)-SH + 2 reduced [2Fe-2S]-[ferredoxin] + 2 S-adenosyl-L-methionine = (sulfur carrier)-H + biotin + 2 5'-deoxyadenosine + 2 L-methionine + 2 oxidized [2Fe-2S]-[ferredoxin]. The protein operates within cofactor biosynthesis; biotin biosynthesis; biotin from 7,8-diaminononanoate: step 2/2. In terms of biological role, catalyzes the conversion of dethiobiotin (DTB) to biotin by the insertion of a sulfur atom into dethiobiotin via a radical-based mechanism. This Buchnera aphidicola subsp. Baizongia pistaciae (strain Bp) protein is Biotin synthase.